The chain runs to 99 residues: Integration host factor subunit alpha (99 aa).

This sequence belongs to the bacterial histone-like protein family. As to quaternary structure, heterodimer of an alpha and a beta chain.

In terms of biological role, this protein is one of the two subunits of integration host factor, a specific DNA-binding protein that functions in genetic recombination as well as in transcriptional and translational control. The sequence is that of Integration host factor subunit alpha from Alteromonas mediterranea (strain DSM 17117 / CIP 110805 / LMG 28347 / Deep ecotype).